The sequence spans 201 residues: Alpha-1-acid glycoprotein 2 (201 aa).

The N-terminal stretch at 1 to 18 (MALSWVLTVLSLLPLLEA) is a signal peptide. Glutamine 19 carries the post-translational modification Pyrrolidone carboxylic acid. Disulfide bonds link cysteine 23–cysteine 165 and cysteine 90–cysteine 183. N-linked (GlcNAc...) (complex) asparagine glycosylation is present at asparagine 33. N-linked (GlcNAc...) asparagine glycosylation is found at asparagine 56, asparagine 72, asparagine 93, and asparagine 103.

Belongs to the calycin superfamily. Lipocalin family. In terms of processing, N-glycosylated. N-glycan heterogeneity at Asn-33: Hex5HexNAc4 (minor), Hex6HexNAc5 (major) and dHex1Hex6HexNAc5 (minor). In terms of tissue distribution, expressed by the liver and secreted in plasma.

The protein localises to the secreted. Functionally, functions as a transport protein in the blood stream. Binds various hydrophobic ligands in the interior of its beta-barrel domain. Also binds synthetic drugs and influences their distribution and availability. Appears to function in modulating the activity of the immune system during the acute-phase reaction. The chain is Alpha-1-acid glycoprotein 2 (ORM2) from Homo sapiens (Human).